The primary structure comprises 297 residues: HTH-type transcriptional regulator ArgP (297 aa).

The region spanning 4–60 (PDYRTLQALDAVIRERGFERAAQKLCITQSAVSQRIKQLENLFGQPLLVRTVPPRPT) is the HTH lysR-type domain. Residues 21–40 (FERAAQKLCITQSAVSQRIK) constitute a DNA-binding region (H-T-H motif).

Belongs to the LysR transcriptional regulatory family. In terms of assembly, homodimer.

Its function is as follows. Controls the transcription of genes involved in arginine and lysine metabolism. The polypeptide is HTH-type transcriptional regulator ArgP (Yersinia enterocolitica serotype O:8 / biotype 1B (strain NCTC 13174 / 8081)).